We begin with the raw amino-acid sequence, 585 residues long: MKSILSQLKTAVSEALIKAFGEDLKDTDPLVVPASNPKFGDYQSNVALSLTKILKKNPREIAQSIIEALDIADTCENPTIAGPGFINFSLKPSYLATLLKEVQQSDRLAIEPAENPQKVIVDFSSPNIAKEMHVGHLRSTIIGDSIARILEFRGQDVLRLNHVGDWGTQFGMLITYLKEVYPDALTKADALDIGDLVAFYKKAKVRFDEDEAFKEASRNQVVKLQSGDEESQKAWQLLCEQSRREFQKIYDILDIKLTERGESFYNPYLADVLTALDEVGLLEEDAGAQCVFLEGFKNKDGDRLPLIVQKSDGGFNYATTDLAAIRYRIKEDQAKRIIYVTDSGQAGHFAQVFQVAERAGFLPDDVEVVHVPFGLVQGEDGKKLKTRAGDTIKLKDLLDEAVNRSRADLEKRLAEDERQETADFIEKVSQVVGIGAVKYADLSQNRTSNYIFSFDKMLALQGNTAPYMLYAYVRVQGVSRQGGIDLSTLPTDTPIILEEAAELTLAKHLLQLSEVLMSVEQDLMPNRLCEYLYDLSRKFNQFYEACPILKAEGDRRISRLILADTTARTLKLGLSLLGIEVLDRM.

The short motif at 126 to 136 (PNIAKEMHVGH) is the 'HIGH' region element.

This sequence belongs to the class-I aminoacyl-tRNA synthetase family. Monomer.

The protein resides in the cytoplasm. The enzyme catalyses tRNA(Arg) + L-arginine + ATP = L-arginyl-tRNA(Arg) + AMP + diphosphate. The protein is Arginine--tRNA ligase of Picosynechococcus sp. (strain ATCC 27264 / PCC 7002 / PR-6) (Agmenellum quadruplicatum).